A 923-amino-acid polypeptide reads, in one-letter code: Protocadherin gamma-B5 (923 aa).

The N-terminal stretch at 1-30 (MGRGTGELGRAERLPVLFLFLLSLFCPALC) is a signal peptide. 6 Cadherin domains span residues 31-133 (EQIR…TPKF), 134-242 (TQNS…PPVF), 243-343 (NRDV…SPEV), 344-448 (TFHS…APVF), 449-558 (HQAS…APRV), and 566-671 (DGSA…LPDI). Residues 31 to 687 (EQIRYRIPEE…SDPQAELQFY (657 aa)) lie on the Extracellular side of the membrane. N-linked (GlcNAc...) asparagine glycosylation is found at asparagine 415 and asparagine 541. The chain crosses the membrane as a helical span at residues 688–708 (LVVALALISVLFLLAVILAIA). At 709–923 (LRLRRSSSPA…KKKSGKKEKK (215 aa)) the chain is on the cytoplasmic side. 2 disordered regions span residues 794-832 (TSHPELQAPPNTDWRFSQAQRPGTSGSQNGDDTGTWPNN) and 893-923 (ATLTNAAGKRDGKAPAGGNGNKKKSGKKEKK). The span at 807 to 832 (WRFSQAQRPGTSGSQNGDDTGTWPNN) shows a compositional bias: polar residues. Over residues 913–923 (NKKKSGKKEKK) the composition is skewed to basic residues.

It is found in the cell membrane. Potential calcium-dependent cell-adhesion protein. May be involved in the establishment and maintenance of specific neuronal connections in the brain. This chain is Protocadherin gamma-B5 (PCDHGB5), found in Pan troglodytes (Chimpanzee).